Consider the following 194-residue polypeptide: Holliday junction branch migration complex subunit RuvA (194 aa).

Residues 1–63 form a domain I region; sequence MFEYLYGTVE…EDTYKLIGFL (63 aa). Residues 64–142 are domain II; sequence DERDRKIFEL…NLTYTEEETV (79 aa). Residues 143-147 form a flexible linker region; sequence SMDML. Residues 147–194 are domain III; it reads LEDLVLALEGLGYNKKEIDKTLEKIDLNKFSSLEDAIKGILKNMRIGD.

Belongs to the RuvA family. As to quaternary structure, homotetramer. Forms an RuvA(8)-RuvB(12)-Holliday junction (HJ) complex. HJ DNA is sandwiched between 2 RuvA tetramers; dsDNA enters through RuvA and exits via RuvB. An RuvB hexamer assembles on each DNA strand where it exits the tetramer. Each RuvB hexamer is contacted by two RuvA subunits (via domain III) on 2 adjacent RuvB subunits; this complex drives branch migration. In the full resolvosome a probable DNA-RuvA(4)-RuvB(12)-RuvC(2) complex forms which resolves the HJ.

It is found in the cytoplasm. Its function is as follows. The RuvA-RuvB-RuvC complex processes Holliday junction (HJ) DNA during genetic recombination and DNA repair, while the RuvA-RuvB complex plays an important role in the rescue of blocked DNA replication forks via replication fork reversal (RFR). RuvA specifically binds to HJ cruciform DNA, conferring on it an open structure. The RuvB hexamer acts as an ATP-dependent pump, pulling dsDNA into and through the RuvAB complex. HJ branch migration allows RuvC to scan DNA until it finds its consensus sequence, where it cleaves and resolves the cruciform DNA. The chain is Holliday junction branch migration complex subunit RuvA from Fusobacterium nucleatum subsp. nucleatum (strain ATCC 25586 / DSM 15643 / BCRC 10681 / CIP 101130 / JCM 8532 / KCTC 2640 / LMG 13131 / VPI 4355).